The sequence spans 368 residues: Zinc finger protein 24 (368 aa).

Residue Lys-22 forms a Glycyl lysine isopeptide (Lys-Gly) (interchain with G-Cter in SUMO2) linkage. Lys-27 is covalently cross-linked (Glycyl lysine isopeptide (Lys-Gly) (interchain with G-Cter in SUMO1); alternate). Lys-27 is covalently cross-linked (Glycyl lysine isopeptide (Lys-Gly) (interchain with G-Cter in SUMO2); alternate). In terms of domain architecture, SCAN box spans 52 to 134; that stretch reads RQRFRQFGYQ…TVLEDLESEL (83 aa). Residues Ser-132 and Ser-142 each carry the phosphoserine modification. Residues Lys-147, Lys-177, and Lys-236 each participate in a glycyl lysine isopeptide (Lys-Gly) (interchain with G-Cter in SUMO2) cross-link. The C2H2-type 1 zinc-finger motif lies at 251 to 273; that stretch reads HICDECGKHFSQGSALILHQRIH. Residues 251-301 form a necessary and sufficient for nuclear localization region; that stretch reads HICDECGKHFSQGSALILHQRIHSGEKPYGCVECGKAFSRSSILVQHQRVH. Ser-274 carries the phosphoserine modification. Residues Lys-277 and Lys-286 each participate in a glycyl lysine isopeptide (Lys-Gly) (interchain with G-Cter in SUMO2) cross-link. C2H2-type zinc fingers lie at residues 279-301, 307-329, and 335-357; these read YGCV…QRVH, YKCL…QRIH, and YECV…QRRH. Ser-292 is modified (phosphoserine). Phosphotyrosine is present on Tyr-335. Glycyl lysine isopeptide (Lys-Gly) (interchain with G-Cter in SUMO2) cross-links involve residues Lys-361 and Lys-367.

Belongs to the krueppel C2H2-type zinc-finger protein family. Post-translationally, sumoylated. In terms of tissue distribution, expressed in many tissues except in heart.

It localises to the nucleus. Functionally, transcription factor required for myelination of differentiated oligodendrocytes. Required for the conversion of oligodendrocytes from the premyelinating to the myelinating state. In the developing central nervous system (CNS), involved in the maintenance in the progenitor stage by promoting the cell cycle. Specifically binds to the 5'-TCAT-3' DNA sequence. Has transcription repressor activity in vitro. The polypeptide is Zinc finger protein 24 (ZNF24) (Homo sapiens (Human)).